We begin with the raw amino-acid sequence, 296 residues long: Glycine--tRNA ligase alpha subunit (296 aa).

The protein belongs to the class-II aminoacyl-tRNA synthetase family. As to quaternary structure, tetramer of two alpha and two beta subunits.

The protein localises to the cytoplasm. It catalyses the reaction tRNA(Gly) + glycine + ATP = glycyl-tRNA(Gly) + AMP + diphosphate. The sequence is that of Glycine--tRNA ligase alpha subunit from Listeria monocytogenes serotype 4b (strain CLIP80459).